Here is a 182-residue protein sequence, read N- to C-terminus: Ribosome-recycling factor (182 aa).

The protein belongs to the RRF family.

It is found in the cytoplasm. In terms of biological role, responsible for the release of ribosomes from messenger RNA at the termination of protein biosynthesis. May increase the efficiency of translation by recycling ribosomes from one round of translation to another. The polypeptide is Ribosome-recycling factor (Picosynechococcus sp. (strain ATCC 27264 / PCC 7002 / PR-6) (Agmenellum quadruplicatum)).